The following is a 424-amino-acid chain: Glutamyl-tRNA reductase (424 aa).

Substrate is bound by residues 49–52 (TCNR), Ser-107, 112–114 (EPQ), and Gln-118. The active-site Nucleophile is the Cys-50. 187-192 (GAGETI) provides a ligand contact to NADP(+).

This sequence belongs to the glutamyl-tRNA reductase family. Homodimer.

It catalyses the reaction (S)-4-amino-5-oxopentanoate + tRNA(Glu) + NADP(+) = L-glutamyl-tRNA(Glu) + NADPH + H(+). It functions in the pathway porphyrin-containing compound metabolism; protoporphyrin-IX biosynthesis; 5-aminolevulinate from L-glutamyl-tRNA(Glu): step 1/2. In terms of biological role, catalyzes the NADPH-dependent reduction of glutamyl-tRNA(Glu) to glutamate 1-semialdehyde (GSA). In Pseudomonas fluorescens (strain ATCC BAA-477 / NRRL B-23932 / Pf-5), this protein is Glutamyl-tRNA reductase.